Reading from the N-terminus, the 447-residue chain is Tubulin beta chain (447 aa).

8 residues coordinate GTP: Q11, E69, S138, G142, T143, G144, N204, and N226. E69 serves as a coordination point for Mg(2+). Positions 424 to 447 (QYQEARSTDSDEYDNEEYYNQQEE) are disordered. Residues 433–447 (SDEYDNEEYYNQQEE) show a composition bias toward acidic residues.

The protein belongs to the tubulin family. In terms of assembly, dimer of alpha and beta chains. A typical microtubule is a hollow water-filled tube with an outer diameter of 25 nm and an inner diameter of 15 nM. Alpha-beta heterodimers associate head-to-tail to form protofilaments running lengthwise along the microtubule wall with the beta-tubulin subunit facing the microtubule plus end conferring a structural polarity. Microtubules usually have 13 protofilaments but different protofilament numbers can be found in some organisms and specialized cells. Mg(2+) is required as a cofactor. In terms of tissue distribution, lens specific.

The protein resides in the cytoplasm. It is found in the cytoskeleton. Tubulin is the major constituent of microtubules, a cylinder consisting of laterally associated linear protofilaments composed of alpha- and beta-tubulin heterodimers. Microtubules grow by the addition of GTP-tubulin dimers to the microtubule end, where a stabilizing cap forms. Below the cap, tubulin dimers are in GDP-bound state, owing to GTPase activity of alpha-tubulin. This chain is Tubulin beta chain, found in Enteroctopus dofleini (North Pacific giant octopus).